Consider the following 131-residue polypeptide: MATRHQVRQSVVSLLYANEMGSEMEEFSNEFLEEKKIRNDQKSFTLTLYNGVLDNLNLIDEALDAHLGKWKLGEIGAVERAILRLGAYEIKFTNTQSAIVINEAILLANELGSDSSTRFINGVLDAISKVN.

It belongs to the NusB family.

Functionally, involved in transcription antitermination. Required for transcription of ribosomal RNA (rRNA) genes. Binds specifically to the boxA antiterminator sequence of the ribosomal RNA (rrn) operons. The sequence is that of Transcription antitermination protein NusB from Campylobacter fetus subsp. fetus (strain 82-40).